Reading from the N-terminus, the 339-residue chain is Replication factor C subunit 5 (339 aa).

Residue 59-66 participates in ATP binding; the sequence is GPPGTGKT.

This sequence belongs to the activator 1 small subunits family. As to quaternary structure, subunit of the RFC complex, an heteropentameric complex consisting of a large subunit RFC1 and four small subunits RFC2, RFC3, RFC4 and RFC5; the RFC complex interacts with PCNA. Forms an heterotetrameric complex with RFC2, RFC3 and RFC4; this complex has ATPase activity but is not stimulated by PCNA. The heterotetramer of subunits RFC2, RFC3, RFC4 and RFC5 interacts with RAD17.

Its subcellular location is the nucleus. Subunit of the replication factor C (RFC) complex which acts during elongation of primed DNA templates by DNA polymerases delta and epsilon, and is necessary for ATP-dependent loading of proliferating cell nuclear antigen (PCNA) onto primed DNA. This chain is Replication factor C subunit 5 (Rfc5), found in Mus musculus (Mouse).